Consider the following 139-residue polypeptide: D-ribose pyranase (139 aa).

The active-site Proton donor is histidine 20. Substrate contacts are provided by residues aspartate 28, histidine 106, and 128–130 (YAN).

Belongs to the RbsD / FucU family. RbsD subfamily. Homodecamer.

It localises to the cytoplasm. The enzyme catalyses beta-D-ribopyranose = beta-D-ribofuranose. Its pathway is carbohydrate metabolism; D-ribose degradation; D-ribose 5-phosphate from beta-D-ribopyranose: step 1/2. In terms of biological role, catalyzes the interconversion of beta-pyran and beta-furan forms of D-ribose. This is D-ribose pyranase from Haemophilus influenzae (strain PittGG).